The sequence spans 229 residues: Glucose-induced degradation protein 8-B homolog (229 aa).

The 33-residue stretch at 26–58 (QRADMNRLIMNYLVTEGFKEAAEKFRMESGIEP) folds into the LisH domain. The 58-residue stretch at 64–121 (SLDERIKIREMVLKGQIQEAIALINSLHPELLDTNRYLYFHLQQQHLIELIRLRETEA) folds into the CTLH domain.

Identified in the CTLH complex that contains at least MAEA, RMND5A (or alternatively its paralog RMND5B), GID8, WDR26, and RANBP9 and/or RANBP10. Interacts with CTNNB1.

It is found in the cytoplasm. It localises to the nucleus. Core component of the CTLH E3 ubiquitin-protein ligase complex that selectively accepts ubiquitin from UBE2H and mediates ubiquitination and subsequent proteasomal degradation of target proteins. Acts as a positive regulator of Wnt signaling pathway by promoting beta-catenin (CTNNB1) nuclear accumulation. Required for normal Wnt signaling and normal dorsoventral patterning during embryogenesis. In Danio rerio (Zebrafish), this protein is Glucose-induced degradation protein 8-B homolog (gid8b).